Here is a 2085-residue protein sequence, read N- to C-terminus: Protein MLP1 homolog (2085 aa).

Coiled coils occupy residues 44 to 367 (KIRE…SHDG), 399 to 513 (KATQ…HVLI), 568 to 630 (YELQ…RMKS), 675 to 1205 (ANEA…KRTQ), 1232 to 1667 (LRRE…LQQE), and 1744 to 1799 (EIEA…AAKE). Residues 365 to 398 (HDGVPGSVPQTPRANGSLLARPSSPFGTPASLRG) are disordered. Residues 934 to 953 (AERLRPLPTPRAPAAAEQPS) are disordered. Residues 1159–1166 (ERRQRLEQ) carry the Nuclear localization signal motif. Residues 1482–1503 (LATATEKNTSLQQQLAASSTEQ) show a composition bias toward polar residues. Disordered regions lie at residues 1482–1514 (LATATEKNTSLQQQLAASSTEQPAAAPVSAAPS) and 1567–1591 (SGGDVATAETSVSAQPSAGLSDEER). The segment covering 1504 to 1514 (PAAAPVSAAPS) has biased composition (low complexity). The segment covering 1574 to 1584 (AETSVSAQPSA) has biased composition (polar residues). The tract at residues 1816 to 2085 (KPPAPAQAPA…GGGGGGGGNQ (270 aa)) is disordered. The segment covering 1817–1827 (PPAPAQAPAPA) has biased composition (pro residues). Composition is skewed to low complexity over residues 1843–1858 (VAPATAAPAAPAQAPS), 1910–1974 (QAGQ…PVPA), and 1982–1994 (ARTARGLYQAGPR). The span at 1995–2016 (GARGGRGGGFVGAGRGAGGAAG) shows a compositional bias: gly residues. The segment covering 2028 to 2040 (GGATATAAAAAAA) has biased composition (low complexity). Composition is skewed to gly residues over residues 2041–2051 (GGAGGSAGAGN) and 2076–2085 (GGGGGGGGNQ).

The nuclear pore complex (NPC) constitutes the exclusive means of nucleocytoplasmic transport. NPCs allow the passive diffusion of ions and small molecules and the active, nuclear transport receptor-mediated bidirectional transport of macromolecules such as proteins, RNAs, ribonucleoparticles (RNPs), and ribosomal subunits across the nuclear envelope. The 55-60 MDa NPC is composed of at least 28 different subunits: AMO1, ELYS, GLE1, GLE2, MLP1, NDC1, NIC96, NSP1, NUP133, NUP145, NUP152, NUP159, NUP170, NUP188, NUP192, NUP37, NUP49, NUP53, NUP56, NUP57, NUP82, NUP84, NUP85, POM152, POM33, POM34, SEC13 and SEH1. Due to its 8-fold rotational symmetry, all subunits are present with 8 copies or multiples thereof.

The protein localises to the nucleus. Its function is as follows. Involved in the structural and functional organization of perinuclear chromatin. Associates with the nuclear pore complex and form filamentous structures along the nuclear periphery. This Chaetomium thermophilum (strain DSM 1495 / CBS 144.50 / IMI 039719) (Thermochaetoides thermophila) protein is Protein MLP1 homolog (MLP1).